Consider the following 336-residue polypeptide: Dihydroorotate dehydrogenase (quinone) (336 aa).

FMN contacts are provided by residues Ala-62–Lys-66 and Thr-86. Residue Lys-66 coordinates substrate. Asn-111–Phe-115 is a binding site for substrate. FMN-binding residues include Asn-139 and Asn-172. Substrate is bound at residue Asn-172. Ser-175 acts as the Nucleophile in catalysis. Substrate is bound at residue Asn-177. The FMN site is built by Lys-217 and Thr-245. Asn-246–Thr-247 is a binding site for substrate. FMN contacts are provided by residues Gly-268, Gly-297, and Tyr-318–Ser-319.

The protein belongs to the dihydroorotate dehydrogenase family. Type 2 subfamily. Monomer. FMN is required as a cofactor.

It is found in the cell membrane. The enzyme catalyses (S)-dihydroorotate + a quinone = orotate + a quinol. The protein operates within pyrimidine metabolism; UMP biosynthesis via de novo pathway; orotate from (S)-dihydroorotate (quinone route): step 1/1. Functionally, catalyzes the conversion of dihydroorotate to orotate with quinone as electron acceptor. In Salmonella agona (strain SL483), this protein is Dihydroorotate dehydrogenase (quinone).